The chain runs to 810 residues: Phenylalanine--tRNA ligase beta subunit (810 aa).

The 112-residue stretch at 39-150 (RTWANGVVVG…ENLPLGSDVR (112 aa)) folds into the tRNA-binding domain. Positions 411–495 (TWSRSIFLRL…RLYGYDNFCD (85 aa)) constitute a B5 domain. Mg(2+) is bound by residues aspartate 473, aspartate 479, glutamate 482, and glutamate 483. In terms of domain architecture, FDX-ACB spans 716-809 (STYPASDRDI…LVEKFGVNLR (94 aa)).

It belongs to the phenylalanyl-tRNA synthetase beta subunit family. Type 1 subfamily. As to quaternary structure, tetramer of two alpha and two beta subunits. Requires Mg(2+) as cofactor.

The protein localises to the cytoplasm. The enzyme catalyses tRNA(Phe) + L-phenylalanine + ATP = L-phenylalanyl-tRNA(Phe) + AMP + diphosphate + H(+). The protein is Phenylalanine--tRNA ligase beta subunit of Trichormus variabilis (strain ATCC 29413 / PCC 7937) (Anabaena variabilis).